Reading from the N-terminus, the 680-residue chain is Probable Xaa-Pro aminopeptidase P (680 aa).

4 residues coordinate Mn(2+): Asp477, Asp488, Glu586, and Glu600.

It belongs to the peptidase M24B family. Requires Mn(2+) as cofactor.

The enzyme catalyses Release of any N-terminal amino acid, including proline, that is linked to proline, even from a dipeptide or tripeptide.. Its function is as follows. Catalyzes the removal of a penultimate prolyl residue from the N-termini of peptides. The protein is Probable Xaa-Pro aminopeptidase P (AMPP) of Podospora anserina (strain S / ATCC MYA-4624 / DSM 980 / FGSC 10383) (Pleurage anserina).